We begin with the raw amino-acid sequence, 143 residues long: Transcriptional regulator MraZ (143 aa).

2 SpoVT-AbrB domains span residues 5-47 (EYFH…PVSA) and 76-119 (ASNQ…DKEK).

This sequence belongs to the MraZ family. Forms oligomers.

Its subcellular location is the cytoplasm. The protein localises to the nucleoid. The protein is Transcriptional regulator MraZ of Finegoldia magna (strain ATCC 29328 / DSM 20472 / WAL 2508) (Peptostreptococcus magnus).